Consider the following 214-residue polypeptide: MLERLNGLLMQAGIVITDTQKTQLVQLVELLHKWNKAYNLTSVRDPDAMLVKHILDSLVVSQHLHGERFIDVGTGPGLPGLPLAIINPDKQFVLLDSLGKRINFIRQVILELGLTNVTPVKSRVEEYQPEVGFDGVLSRAFASLEDMLSWCHHLPSAQGSFLALKGQFPEQELAQLPANIHLVASHQLVVPELEGERHLLEFKHIQPEQGRSFI.

Residues Gly73, Leu78, 124 to 125, and Arg139 each bind S-adenosyl-L-methionine; that span reads VE.

Belongs to the methyltransferase superfamily. RNA methyltransferase RsmG family.

Its subcellular location is the cytoplasm. It carries out the reaction guanosine(527) in 16S rRNA + S-adenosyl-L-methionine = N(7)-methylguanosine(527) in 16S rRNA + S-adenosyl-L-homocysteine. Its function is as follows. Specifically methylates the N7 position of guanine in position 527 of 16S rRNA. The protein is Ribosomal RNA small subunit methyltransferase G of Aeromonas hydrophila subsp. hydrophila (strain ATCC 7966 / DSM 30187 / BCRC 13018 / CCUG 14551 / JCM 1027 / KCTC 2358 / NCIMB 9240 / NCTC 8049).